The chain runs to 363 residues: Phosphoserine aminotransferase (363 aa).

Position 42 (arginine 42) interacts with L-glutamate. Pyridoxal 5'-phosphate is bound by residues 76-77, tryptophan 102, threonine 156, aspartate 175, and glutamine 198; that span reads GR. Lysine 199 carries the post-translational modification N6-(pyridoxal phosphate)lysine. Pyridoxal 5'-phosphate is bound at residue 240-241; the sequence is NT.

This sequence belongs to the class-V pyridoxal-phosphate-dependent aminotransferase family. SerC subfamily. In terms of assembly, homodimer. It depends on pyridoxal 5'-phosphate as a cofactor.

The protein resides in the cytoplasm. The catalysed reaction is O-phospho-L-serine + 2-oxoglutarate = 3-phosphooxypyruvate + L-glutamate. It carries out the reaction 4-(phosphooxy)-L-threonine + 2-oxoglutarate = (R)-3-hydroxy-2-oxo-4-phosphooxybutanoate + L-glutamate. Its pathway is amino-acid biosynthesis; L-serine biosynthesis; L-serine from 3-phospho-D-glycerate: step 2/3. It participates in cofactor biosynthesis; pyridoxine 5'-phosphate biosynthesis; pyridoxine 5'-phosphate from D-erythrose 4-phosphate: step 3/5. Its function is as follows. Catalyzes the reversible conversion of 3-phosphohydroxypyruvate to phosphoserine and of 3-hydroxy-2-oxo-4-phosphonooxybutanoate to phosphohydroxythreonine. This is Phosphoserine aminotransferase from Shewanella sp. (strain ANA-3).